A 33-amino-acid chain; its full sequence is Mytimycin (33 aa).

It is found in the secreted. Its function is as follows. Has antifungal activity against N.crassa and F.culmorum. In Mytilus edulis (Blue mussel), this protein is Mytimycin.